We begin with the raw amino-acid sequence, 128 residues long: RutC family protein BU371 (128 aa).

It belongs to the RutC family.

The sequence is that of RutC family protein BU371 from Buchnera aphidicola subsp. Acyrthosiphon pisum (strain APS) (Acyrthosiphon pisum symbiotic bacterium).